The sequence spans 289 residues: Glucose and ribitol dehydrogenase homolog 2 (289 aa).

The tract at residues 1–32 (MASGFPPQKQETQPGIQHVMEPTPEFSSSNYK) is disordered. Residue 43–67 (LVTGGDSGIGKAVCHCYALEGASVA) participates in NAD(+) binding. Residue Ser-180 participates in substrate binding. The Proton acceptor role is filled by Tyr-193.

Belongs to the short-chain dehydrogenases/reductases (SDR) family.

May act as a short alcohol-polyol-sugar dehydrogenase possibly related to carbohydrate metabolism and the acquisition of desiccation tolerance. May also be involved in signal transduction. This Arabidopsis thaliana (Mouse-ear cress) protein is Glucose and ribitol dehydrogenase homolog 2.